A 261-amino-acid polypeptide reads, in one-letter code: Glucosamine-6-phosphate deaminase (261 aa).

Residue D67 is the Proton acceptor; for enolization step of the active site. The For ring-opening step role is filled by D136. H138 (proton acceptor; for ring-opening step) is an active-site residue. The For ring-opening step role is filled by E143.

This sequence belongs to the glucosamine/galactosamine-6-phosphate isomerase family. NagB subfamily.

The catalysed reaction is alpha-D-glucosamine 6-phosphate + H2O = beta-D-fructose 6-phosphate + NH4(+). It functions in the pathway amino-sugar metabolism; N-acetylneuraminate degradation; D-fructose 6-phosphate from N-acetylneuraminate: step 5/5. Functionally, catalyzes the reversible isomerization-deamination of glucosamine 6-phosphate (GlcN6P) to form fructose 6-phosphate (Fru6P) and ammonium ion. The polypeptide is Glucosamine-6-phosphate deaminase (Beutenbergia cavernae (strain ATCC BAA-8 / DSM 12333 / CCUG 43141 / JCM 11478 / NBRC 16432 / NCIMB 13614 / HKI 0122)).